Consider the following 265-residue polypeptide: Mlc titration factor A (265 aa).

Zn(2+) is bound by residues His111, His148, His152, and Glu211.

It belongs to the MtfA family. As to quaternary structure, interacts with Mlc. Zn(2+) is required as a cofactor.

It localises to the cytoplasm. Its function is as follows. Involved in the modulation of the activity of the glucose-phosphotransferase system (glucose-PTS). Interacts with the transcriptional repressor Mlc, preventing its interaction with DNA and leading to the modulation of expression of genes regulated by Mlc, including ptsG, which encodes the PTS system glucose-specific EIICB component. Functionally, shows zinc-dependent metallopeptidase activity. The sequence is that of Mlc titration factor A from Salmonella schwarzengrund (strain CVM19633).